The chain runs to 367 residues: Polygalacturonase (367 aa).

Residues 1 to 18 (MRTSFVTMLALGAAAVSA) form the signal peptide. Cysteines 34 and 49 form a disulfide. PbH1 repeat units lie at residues 161–191 (ADRL…DVGS), 192–213 (STFI…AINS), 214–234 (GSNI…SIGS), 243–264 (VKDV…RVKT), and 272–294 (VSGV…VIEQ). The Proton donor role is filled by Asp-206. Cysteines 208 and 224 form a disulfide. Residue His-228 is part of the active site. N-linked (GlcNAc...) asparagine glycans are attached at residues Asn-318 and Asn-336. 2 cysteine pairs are disulfide-bonded: Cys-334–Cys-339 and Cys-358–Cys-367.

This sequence belongs to the glycosyl hydrolase 28 family.

It localises to the secreted. The catalysed reaction is (1,4-alpha-D-galacturonosyl)n+m + H2O = (1,4-alpha-D-galacturonosyl)n + (1,4-alpha-D-galacturonosyl)m.. The polypeptide is Polygalacturonase (PG1) (Penicillium digitatum (Green mold)).